A 181-amino-acid polypeptide reads, in one-letter code: Large ribosomal subunit protein uL5c (181 aa).

Belongs to the universal ribosomal protein uL5 family. In terms of assembly, part of the 50S ribosomal subunit; contacts the 5S rRNA.

The protein localises to the plastid. The protein resides in the cyanelle. Binds 5S rRNA, forms part of the central protuberance of the 50S subunit. The protein is Large ribosomal subunit protein uL5c (rpl5) of Cyanophora paradoxa.